Consider the following 149-residue polypeptide: Nascent polypeptide-associated complex subunit beta-2 (149 aa).

The NAC-A/B domain occupies 38-103; it reads DKDNTKLQAE…PKENTLNGLY (66 aa).

Belongs to the NAC-beta family. Part of the nascent polypeptide-associated complex (NAC), consisting of EGD2 and either EGD1 or BTT1. NAC associates with ribosomes via EGD1 or BTT1.

The protein localises to the cytoplasm. It localises to the nucleus. Functionally, acts as a component of the nascent polypeptide-associated complex (NAC), which promotes mitochondrial protein import by enhancing productive ribosome interactions with the outer mitochondrial membrane. Also blocks the inappropriate interaction of ribosomes translating non-secretory nascent polypeptides with translocation sites in the membrane of the endoplasmic reticulum. BTT1 may act as a transcription factor that exert a negative effect on the expression of several genes that are transcribed by RNA polymerase II. In Saccharomyces cerevisiae (strain ATCC 204508 / S288c) (Baker's yeast), this protein is Nascent polypeptide-associated complex subunit beta-2 (BTT1).